The primary structure comprises 90 residues: DNA/RNA-binding protein Alba (90 aa).

The residue at position 11 (lysine 11) is an N6-acetyllysine.

This sequence belongs to the histone-like Alba family. Acetylated. Acetylation at Lys-11 decreases DNA-binding affinity.

It localises to the cytoplasm. The protein localises to the chromosome. Functionally, binds double-stranded DNA tightly but without sequence specificity. Involved in DNA compaction. This chain is DNA/RNA-binding protein Alba, found in Picrophilus torridus (strain ATCC 700027 / DSM 9790 / JCM 10055 / NBRC 100828 / KAW 2/3).